A 535-amino-acid chain; its full sequence is UDP-glycosyltransferase stmC (535 aa).

N-linked (GlcNAc...) asparagine glycosylation is found at N70 and N422. The helical transmembrane segment at 506–526 threads the bilayer; sequence ASNLDLYIVCIAFVAVPVGVA.

It belongs to the glycosyltransferase 28 family.

The protein localises to the membrane. The enzyme catalyses stromemycin aglycone + UDP-alpha-D-glucose = stromemycin + UDP + H(+). It carries out the reaction exophillate aglycone + UDP-alpha-D-glucose = exophillate + UDP + H(+). It participates in mycotoxin biosynthesis. UDP-glycosyltransferase; part of the gene cluster that mediates the biosynthesis of stromemycin, a depside C-glucoside with two unsaturated C9 side chains belonging to aromatic polyketide glycosides. Acts as the tailoring enzyme responsible for 3-C-glucosylation of bininalkenylresorcylic acid produced by the combined action of the HR-PKS stmA and the NR-PKS stmB to yield stromemycin. Possesses a relatively strict acceptor specificity towards bininalkenylresorcylic acid for C-glycosylation, but is able to use several donors including UDP-alpha-D-galactose, UDP-alpha-D-xylose, UDP-alpha-D-4-keto-6-deoxyglucose, UDP-alpha-D-quinovose, and UDP-beta-L-rhamnose. The protein is UDP-glycosyltransferase stmC of Aspergillus ustus.